The chain runs to 475 residues: UDP-N-acetylmuramate--L-alanine ligase (475 aa).

125 to 131 (GTHGKTT) is an ATP binding site.

Belongs to the MurCDEF family.

It localises to the cytoplasm. It catalyses the reaction UDP-N-acetyl-alpha-D-muramate + L-alanine + ATP = UDP-N-acetyl-alpha-D-muramoyl-L-alanine + ADP + phosphate + H(+). It functions in the pathway cell wall biogenesis; peptidoglycan biosynthesis. Functionally, cell wall formation. The sequence is that of UDP-N-acetylmuramate--L-alanine ligase from Actinobacillus pleuropneumoniae serotype 7 (strain AP76).